Here is a 202-residue protein sequence, read N- to C-terminus: MIDNGSMFIAIEGIDGSGKTTLAGDIASYTGFYLTREPTDRFCYDYIEADYNDESSIINFFLFTLDRYMHQKEIKNHLINGVISDRYVFSSIAYQGSGMEKRFKNMDETISWMLDVSRFIIMPDLIIYLKIDPGIALKRLNLRKNEKKNTDAFERLEMLKNVSKYYDYIFSGIIKIPVIKINAEMEYNYVKDEAIKGLNDYL.

13 to 20 (GIDGSGKT) provides a ligand contact to ATP.

It belongs to the thymidylate kinase family.

The enzyme catalyses dTMP + ATP = dTDP + ADP. The sequence is that of Probable thymidylate kinase from Picrophilus torridus (strain ATCC 700027 / DSM 9790 / JCM 10055 / NBRC 100828 / KAW 2/3).